A 327-amino-acid polypeptide reads, in one-letter code: Glycerol-3-phosphate dehydrogenase [NAD(P)+] (327 aa).

NADPH contacts are provided by Ser10, Phe11, Arg31, and Lys108. The sn-glycerol 3-phosphate site is built by Lys108, Gly136, and Ser138. Ala140 lines the NADPH pocket. 5 residues coordinate sn-glycerol 3-phosphate: Lys191, Asp246, Ser256, Arg257, and Asn258. The Proton acceptor role is filled by Lys191. Residue Arg257 coordinates NADPH. Residues Leu281 and Glu283 each contribute to the NADPH site.

It belongs to the NAD-dependent glycerol-3-phosphate dehydrogenase family.

The protein resides in the cytoplasm. It catalyses the reaction sn-glycerol 3-phosphate + NAD(+) = dihydroxyacetone phosphate + NADH + H(+). The catalysed reaction is sn-glycerol 3-phosphate + NADP(+) = dihydroxyacetone phosphate + NADPH + H(+). The protein operates within membrane lipid metabolism; glycerophospholipid metabolism. In terms of biological role, catalyzes the reduction of the glycolytic intermediate dihydroxyacetone phosphate (DHAP) to sn-glycerol 3-phosphate (G3P), the key precursor for phospholipid synthesis. This chain is Glycerol-3-phosphate dehydrogenase [NAD(P)+], found in Ehrlichia ruminantium (strain Welgevonden).